Reading from the N-terminus, the 479-residue chain is NADH-quinone oxidoreductase subunit N 2 (479 aa).

A run of 14 helical transmembrane segments spans residues 9–29 (WALASVPEIIVVTGACVLLIV), 40–60 (LLLWASVAIVLLAAVATLMLA), 75–95 (RFAVFFKLVFYLATILTFFLS), 110–130 (YVLLLFALVGMMIMASAIDLL), 131–151 (SIYVGLELMVLCTYVLTGFLR), 164–184 (VILGAVSTAIFLYGVSLIYGL), 206–226 (LLLAVVFIVAGLVFKIGAVPF), 238–258 (PTTITAFMSVAPKAAGFAVIL), 272–292 (WIIVAAIAVATMALGSFVALV), 299–319 (LLAYSSIAHAGFAIFGVVAGG), 326–346 (VMLYLLIYTFMNLGIFGAVIM), 371–391 (ALLMLLYLFSLAGIPPTAGFF), 404–424 (GFVALAVIAVLLSVVSAYFYI), and 449–469 (ATLAFTAAGTIGIGLFPAWFL).

Belongs to the complex I subunit 2 family. NDH-1 is composed of 14 different subunits. Subunits NuoA, H, J, K, L, M, N constitute the membrane sector of the complex.

It localises to the cell inner membrane. It carries out the reaction a quinone + NADH + 5 H(+)(in) = a quinol + NAD(+) + 4 H(+)(out). Functionally, NDH-1 shuttles electrons from NADH, via FMN and iron-sulfur (Fe-S) centers, to quinones in the respiratory chain. The immediate electron acceptor for the enzyme in this species is believed to be ubiquinone. Couples the redox reaction to proton translocation (for every two electrons transferred, four hydrogen ions are translocated across the cytoplasmic membrane), and thus conserves the redox energy in a proton gradient. The protein is NADH-quinone oxidoreductase subunit N 2 of Rhizobium meliloti (strain 1021) (Ensifer meliloti).